Here is a 239-residue protein sequence, read N- to C-terminus: uncharacterized protein (239 aa).

The tract at residues 104 to 127 (LPATSQSSQPKSTNSSTESSSIGQ) is disordered. Residues 107-127 (TSQSSQPKSTNSSTESSSIGQ) are compositionally biased toward low complexity. Residues 134–202 (ENEINLNKNK…HFIQNNQESF (69 aa)) adopt a coiled-coil conformation. The chain crosses the membrane as a helical span at residues 211 to 231 (VKIGSAFIIYIFYNVLFFIIV).

Its subcellular location is the membrane. This is an uncharacterized protein from Dictyostelium discoideum (Social amoeba).